The chain runs to 288 residues: Bis(5'-nucleosyl)-tetraphosphatase, symmetrical (288 aa).

This sequence belongs to the Ap4A hydrolase family.

The catalysed reaction is P(1),P(4)-bis(5'-adenosyl) tetraphosphate + H2O = 2 ADP + 2 H(+). In terms of biological role, hydrolyzes diadenosine 5',5'''-P1,P4-tetraphosphate to yield ADP. The sequence is that of Bis(5'-nucleosyl)-tetraphosphatase, symmetrical from Baumannia cicadellinicola subsp. Homalodisca coagulata.